The following is a 222-amino-acid chain: Thiamine-phosphate synthase (222 aa).

4-amino-2-methyl-5-(diphosphooxymethyl)pyrimidine contacts are provided by residues 42 to 46 (QYRDK) and N74. Residues D75 and D94 each coordinate Mg(2+). Residue T113 coordinates 4-amino-2-methyl-5-(diphosphooxymethyl)pyrimidine. 140-142 (SAT) contributes to the 2-[(2R,5Z)-2-carboxy-4-methylthiazol-5(2H)-ylidene]ethyl phosphate binding site. 4-amino-2-methyl-5-(diphosphooxymethyl)pyrimidine is bound at residue K143. G169 lines the 2-[(2R,5Z)-2-carboxy-4-methylthiazol-5(2H)-ylidene]ethyl phosphate pocket.

The protein belongs to the thiamine-phosphate synthase family. Mg(2+) serves as cofactor.

It carries out the reaction 2-[(2R,5Z)-2-carboxy-4-methylthiazol-5(2H)-ylidene]ethyl phosphate + 4-amino-2-methyl-5-(diphosphooxymethyl)pyrimidine + 2 H(+) = thiamine phosphate + CO2 + diphosphate. The enzyme catalyses 2-(2-carboxy-4-methylthiazol-5-yl)ethyl phosphate + 4-amino-2-methyl-5-(diphosphooxymethyl)pyrimidine + 2 H(+) = thiamine phosphate + CO2 + diphosphate. It catalyses the reaction 4-methyl-5-(2-phosphooxyethyl)-thiazole + 4-amino-2-methyl-5-(diphosphooxymethyl)pyrimidine + H(+) = thiamine phosphate + diphosphate. Its pathway is cofactor biosynthesis; thiamine diphosphate biosynthesis; thiamine phosphate from 4-amino-2-methyl-5-diphosphomethylpyrimidine and 4-methyl-5-(2-phosphoethyl)-thiazole: step 1/1. Its function is as follows. Condenses 4-methyl-5-(beta-hydroxyethyl)thiazole monophosphate (THZ-P) and 2-methyl-4-amino-5-hydroxymethyl pyrimidine pyrophosphate (HMP-PP) to form thiamine monophosphate (TMP). This is Thiamine-phosphate synthase from Marinobacter nauticus (strain ATCC 700491 / DSM 11845 / VT8) (Marinobacter aquaeolei).